We begin with the raw amino-acid sequence, 1212 residues long: DNA-directed RNA polymerase subunit beta'' (1212 aa).

Zn(2+)-binding residues include C229, C302, C309, and C312. Residues 1162 to 1212 (QKETSKNKKETSKNKKETSKNKKETSKNKKETSKNKKETSKNKKEASKNKK) form a disordered region.

It belongs to the RNA polymerase beta' chain family. RpoC2 subfamily. As to quaternary structure, in plastids the minimal PEP RNA polymerase catalytic core is composed of four subunits: alpha, beta, beta', and beta''. When a (nuclear-encoded) sigma factor is associated with the core the holoenzyme is formed, which can initiate transcription. It depends on Zn(2+) as a cofactor.

Its subcellular location is the plastid. The protein localises to the chloroplast. It carries out the reaction RNA(n) + a ribonucleoside 5'-triphosphate = RNA(n+1) + diphosphate. In terms of biological role, DNA-dependent RNA polymerase catalyzes the transcription of DNA into RNA using the four ribonucleoside triphosphates as substrates. This is DNA-directed RNA polymerase subunit beta'' from Cryptomeria japonica (Japanese cedar).